A 164-amino-acid polypeptide reads, in one-letter code: MGLLAAIGVLLPFPFYWWLWTNAQSWVNLCGRERDPSTVMARVSHVLKAAQLLSLFSVASLSWPPPLYFWPLMAFGQFLNFRVYQLLGEAGTYYGVRFGKNIPWVTEFPFGVIRDPQYVGSIMSLLACLSWVPFQYILLWSLGYVFMMFLESKEDPNARAKSIS.

The segment at residues 1–21 is an intramembrane region (helical); the sequence is MGLLAAIGVLLPFPFYWWLWT. Residues 22–30 are Lumenal-facing; it reads NAQSWVNLC. A helical membrane pass occupies residues 31 to 52; that stretch reads GRERDPSTVMARVSHVLKAAQL. Over 53 to 69 the chain is Cytoplasmic; that stretch reads LSLFSVASLSWPPPLYF. Residues 70–90 traverse the membrane as a helical segment; that stretch reads WPLMAFGQFLNFRVYQLLGEA. Position 74-76 (74-76) interacts with S-adenosyl-L-methionine; the sequence is AFG. Topologically, residues 91-131 are lumenal; it reads GTYYGVRFGKNIPWVTEFPFGVIRDPQYVGSIMSLLACLSW. A helical membrane pass occupies residues 132 to 151; that stretch reads VPFQYILLWSLGYVFMMFLE. Over 152–164 the chain is Cytoplasmic; sequence SKEDPNARAKSIS. 154–155 lines the S-adenosyl-L-methionine pocket; it reads ED.

It belongs to the class VI-like SAM-binding methyltransferase superfamily. PEMT/PEM2 methyltransferase family.

Its subcellular location is the endoplasmic reticulum membrane. The enzyme catalyses a 1,2-diacyl-sn-glycero-3-phospho-N-methylethanolamine + S-adenosyl-L-methionine = a 1,2-diacyl-sn-glycero-3-phospho-N,N-dimethylethanolamine + S-adenosyl-L-homocysteine + H(+). It carries out the reaction a 1,2-diacyl-sn-glycero-3-phospho-N,N-dimethylethanolamine + S-adenosyl-L-methionine = a 1,2-diacyl-sn-glycero-3-phosphocholine + S-adenosyl-L-homocysteine + H(+). The protein operates within phospholipid metabolism; phosphatidylcholine biosynthesis. Functionally, catalyzes the second two steps of the methylation pathway of phosphatidylcholine biosynthesis, the SAM-dependent methylation of phosphatidylmonomethylethanolamine (PMME) to phosphatidyldimethylethanolamine (PDME) and of PDME to phosphatidylcholine (PC). In Arabidopsis thaliana (Mouse-ear cress), this protein is Phosphatidyl-N-methylethanolamine N-methyltransferase (PLMT).